We begin with the raw amino-acid sequence, 188 residues long: F-box only protein 36 (188 aa).

Residues 91 to 137 (FDYLERLSDRLLLKIICYLDLEDIASLSQTSSKFEKLCKSDLLWEQI) form the F-box domain.

As to quaternary structure, directly interacts with SKP1 and CUL1.

In terms of biological role, substrate-recognition component of the SCF (SKP1-CUL1-F-box protein)-type E3 ubiquitin ligase complex. The polypeptide is F-box only protein 36 (Fbxo36) (Mus musculus (Mouse)).